The following is a 436-amino-acid chain: GTPase Der (436 aa).

EngA-type G domains lie at 3-167 and 177-352; these read NIVA…PIKP and PRFA…ENRQ. GTP contacts are provided by residues 9–16, 56–60, 119–122, 183–190, 230–234, and 295–298; these read GRPNVGKS, DTGGY, NKVD, GRPNAGKS, DTAGI, and NKWD. Residues 353–436 enclose the KH-like domain; it reads QRISTSKFNE…VPIDIYIREK (84 aa).

The protein belongs to the TRAFAC class TrmE-Era-EngA-EngB-Septin-like GTPase superfamily. EngA (Der) GTPase family. In terms of assembly, associates with the 50S ribosomal subunit.

Its function is as follows. GTPase that plays an essential role in the late steps of ribosome biogenesis. In Flavobacterium psychrophilum (strain ATCC 49511 / DSM 21280 / CIP 103535 / JIP02/86), this protein is GTPase Der.